We begin with the raw amino-acid sequence, 387 residues long: Patatin-05 (387 aa).

The signal sequence occupies residues 1–23 (MATTKSVLVLIFMILATTSSTFA). A PNPLA domain is found at 32–230 (LSIDGGGIKG…TVADPALLSV (199 aa)). Positions 36-41 (GGGIKG) match the GXGXXG motif. Positions 75-79 (GTSTG) match the GXSXG motif. Ser77 (nucleophile) is an active-site residue. Asn115 and Asn203 each carry an N-linked (GlcNAc...) asparagine glycan. The Proton acceptor role is filled by Asp216. The short motif at 216 to 218 (DGA) is the DGA/G element.

This sequence belongs to the patatin family. Tuber.

Its subcellular location is the vacuole. Functionally, probable lipolytic acyl hydrolase (LAH), an activity which is thought to be involved in the response of tubers to pathogens. In Solanum tuberosum (Potato), this protein is Patatin-05 (pat1-k1).